The primary structure comprises 361 residues: uncharacterized protein (361 aa).

WD repeat units lie at residues 57-96, 103-142, 146-184, 187-229, 237-275, and 280-318; these read RHKK…VSSK, KEIS…GIIH, DHID…KPIL, EQDE…DHTD, SHDF…YERI, and SSRS…GDES. The tract at residues 311-361 is disordered; sequence DQKEGDESSSSDNLDSDEDSSSDSEFSSPKKKKKVGNQGKKPLGTDFFDGL.

The protein localises to the nucleus. It is found in the nucleolus. This is an uncharacterized protein from Schizosaccharomyces pombe (strain 972 / ATCC 24843) (Fission yeast).